The following is a 200-amino-acid chain: Prostamide/prostaglandin F synthase (200 aa).

Belongs to the peroxiredoxin-like PRXL2 family. Prostamide/prostaglandin F synthase subfamily.

Its subcellular location is the cytoplasm. The protein localises to the cytosol. The catalysed reaction is prostaglandin H2 + [thioredoxin]-dithiol = prostaglandin F2alpha + [thioredoxin]-disulfide. It catalyses the reaction prostamide F2alpha + [thioredoxin]-disulfide = prostamide H2 + [thioredoxin]-dithiol. Its function is as follows. Catalyzes the reduction of prostaglandin-ethanolamide H(2) (prostamide H(2)) to prostamide F(2alpha) with NADPH as proton donor. Also able to reduce prostaglandin H(2) to prostaglandin F(2alpha). The protein is Prostamide/prostaglandin F synthase (prxl2b) of Salmo salar (Atlantic salmon).